The chain runs to 260 residues: Dolichol-phosphate mannosyltransferase subunit 1 (260 aa).

Positions 1-25 (MASTGASRSLAASPRPPQGRSSRQD) are disordered. Ala-2 bears the N-acetylalanine mark. Phosphoserine occurs at positions 3 and 9. Residues Pro-32, Tyr-34, Glu-36, Ile-63, Asp-65, Asp-118, Ala-119, Asp-120, Arg-147, Arg-234, and Lys-240 each contribute to the GDP-alpha-D-mannose site. Asp-120 contacts Mg(2+). Asp-120 is a binding site for Mn(2+).

This sequence belongs to the glycosyltransferase 2 family. As to quaternary structure, component of the dolichol-phosphate mannose (DPM) synthase complex composed of DPM1, DPM2 and DPM3; within the complex, directly interacts with DPM3. This interaction may stabilize DPM1. Requires Mg(2+) as cofactor. It depends on Mn(2+) as a cofactor. Ca(2+) serves as cofactor.

It is found in the endoplasmic reticulum. It carries out the reaction a di-trans,poly-cis-dolichyl phosphate + GDP-alpha-D-mannose = a di-trans,poly-cis-dolichyl beta-D-mannosyl phosphate + GDP. It functions in the pathway protein modification; protein glycosylation. In terms of biological role, transfers mannose from GDP-mannose to dolichol monophosphate to form dolichol phosphate mannose (Dol-P-Man) which is the mannosyl donor in pathways leading to N-glycosylation, glycosyl phosphatidylinositol membrane anchoring, and O-mannosylation of proteins; catalytic subunit of the dolichol-phosphate mannose (DPM) synthase complex. This Mus musculus (Mouse) protein is Dolichol-phosphate mannosyltransferase subunit 1 (Dpm1).